A 392-amino-acid chain; its full sequence is NAD(P)H-quinone oxidoreductase subunit H, chloroplastic (392 aa).

It belongs to the complex I 49 kDa subunit family. As to quaternary structure, NDH is composed of at least 16 different subunits, 5 of which are encoded in the nucleus.

It localises to the plastid. The protein resides in the chloroplast thylakoid membrane. The enzyme catalyses a plastoquinone + NADH + (n+1) H(+)(in) = a plastoquinol + NAD(+) + n H(+)(out). It carries out the reaction a plastoquinone + NADPH + (n+1) H(+)(in) = a plastoquinol + NADP(+) + n H(+)(out). Its function is as follows. NDH shuttles electrons from NAD(P)H:plastoquinone, via FMN and iron-sulfur (Fe-S) centers, to quinones in the photosynthetic chain and possibly in a chloroplast respiratory chain. The immediate electron acceptor for the enzyme in this species is believed to be plastoquinone. Couples the redox reaction to proton translocation, and thus conserves the redox energy in a proton gradient. The sequence is that of NAD(P)H-quinone oxidoreductase subunit H, chloroplastic from Marchantia polymorpha (Common liverwort).